We begin with the raw amino-acid sequence, 399 residues long: MTRRLFTSESVTEGHPDKIADQISDGILDALLAEDPRSRVAVETLITTGQVHVAGEVTTGAYADIPAIVRRTILDIGYDSSRKGFDGASCGVSVSIGSQSADIAQGVDNAFELRTGASESALDAQGAGDQGMMFGFACSETPELMPMPIALAHRLSRRLAQVRREGVVPYLRPDGKTQVTVEYEGLRPVRLNTVLVSSQHAADVSLDSLLTPDIRDHVIAPEVEGLGLGLDVEDYRLLVNPTGRFEVGGPMGDAGLTGRKIIVDTYGGYARHGGGAFSGKDPSKVDRSAAYAMRWVAKNVVAAGLAERCEAQVAYAIGKAHPVSLFVETFGTETVPVERIEKAVTEVFDLRPAAIIRDLQLLRPIYSQTAAYGHFGRELPDFTWESTDRAADLKSVAGA.

His-15 is a binding site for ATP. Asp-17 is a binding site for Mg(2+). Residue Glu-43 coordinates K(+). The L-methionine site is built by Glu-56 and Gln-99. Residues 99–109 form a flexible loop region; that stretch reads QSADIAQGVDN. ATP contacts are provided by residues 174–176, 244–245, Asp-253, 259–260, Ala-276, and Lys-280; these read DGK, RF, and RK. Position 253 (Asp-253) interacts with L-methionine. L-methionine is bound at residue Lys-284.

The protein belongs to the AdoMet synthase family. Homotetramer; dimer of dimers. It depends on Mg(2+) as a cofactor. The cofactor is K(+).

The protein resides in the cytoplasm. The enzyme catalyses L-methionine + ATP + H2O = S-adenosyl-L-methionine + phosphate + diphosphate. Its pathway is amino-acid biosynthesis; S-adenosyl-L-methionine biosynthesis; S-adenosyl-L-methionine from L-methionine: step 1/1. In terms of biological role, catalyzes the formation of S-adenosylmethionine (AdoMet) from methionine and ATP. The overall synthetic reaction is composed of two sequential steps, AdoMet formation and the subsequent tripolyphosphate hydrolysis which occurs prior to release of AdoMet from the enzyme. This Salinispora arenicola (strain CNS-205) protein is S-adenosylmethionine synthase.